A 150-amino-acid polypeptide reads, in one-letter code: 6,7-dimethyl-8-ribityllumazine synthase (150 aa).

Residues phenylalanine 11, 43–45 (VFD), and 67–69 (AVI) each bind 5-amino-6-(D-ribitylamino)uracil. 72–73 (AT) is a (2S)-2-hydroxy-3-oxobutyl phosphate binding site. Residue histidine 75 is the Proton donor of the active site. Position 100 (leucine 100) interacts with 5-amino-6-(D-ribitylamino)uracil. Arginine 115 lines the (2S)-2-hydroxy-3-oxobutyl phosphate pocket.

Belongs to the DMRL synthase family.

The catalysed reaction is (2S)-2-hydroxy-3-oxobutyl phosphate + 5-amino-6-(D-ribitylamino)uracil = 6,7-dimethyl-8-(1-D-ribityl)lumazine + phosphate + 2 H2O + H(+). Its pathway is cofactor biosynthesis; riboflavin biosynthesis; riboflavin from 2-hydroxy-3-oxobutyl phosphate and 5-amino-6-(D-ribitylamino)uracil: step 1/2. Its function is as follows. Catalyzes the formation of 6,7-dimethyl-8-ribityllumazine by condensation of 5-amino-6-(D-ribitylamino)uracil with 3,4-dihydroxy-2-butanone 4-phosphate. This is the penultimate step in the biosynthesis of riboflavin. The sequence is that of 6,7-dimethyl-8-ribityllumazine synthase from Pyrobaculum calidifontis (strain DSM 21063 / JCM 11548 / VA1).